The primary structure comprises 488 residues: Cobyric acid synthase (488 aa).

One can recognise a GATase cobBQ-type domain in the interval 248–441; that stretch reads VLRVVVPALP…VHGLFDAPDA (194 aa). Cys-328 serves as the catalytic Nucleophile. His-433 is an active-site residue.

It belongs to the CobB/CobQ family. CobQ subfamily.

The protein operates within cofactor biosynthesis; adenosylcobalamin biosynthesis. In terms of biological role, catalyzes amidations at positions B, D, E, and G on adenosylcobyrinic A,C-diamide. NH(2) groups are provided by glutamine, and one molecule of ATP is hydrogenolyzed for each amidation. The protein is Cobyric acid synthase of Burkholderia ambifaria (strain ATCC BAA-244 / DSM 16087 / CCUG 44356 / LMG 19182 / AMMD) (Burkholderia cepacia (strain AMMD)).